Here is a 192-residue protein sequence, read N- to C-terminus: Glycerol-3-phosphate acyltransferase (192 aa).

A run of 5 helical transmembrane segments spans residues 1 to 21 (MFIAILMGAYLLGSIPFAYIL), 49 to 69 (GLAGLVLLLDIAKSAVLIYSL), 80 to 100 (ELCIVGLLSVLGHIYPIWLKF), 110 to 130 (IGVIIPLNPLMLCVFFISWLF), and 143 to 163 (IVSIIATMIVCYLTESGVVAL).

It belongs to the PlsY family. As to quaternary structure, probably interacts with PlsX.

The protein resides in the cell inner membrane. The catalysed reaction is an acyl phosphate + sn-glycerol 3-phosphate = a 1-acyl-sn-glycero-3-phosphate + phosphate. The protein operates within lipid metabolism; phospholipid metabolism. In terms of biological role, catalyzes the transfer of an acyl group from acyl-phosphate (acyl-PO(4)) to glycerol-3-phosphate (G3P) to form lysophosphatidic acid (LPA). This enzyme utilizes acyl-phosphate as fatty acyl donor, but not acyl-CoA or acyl-ACP. The sequence is that of Glycerol-3-phosphate acyltransferase from Anaplasma phagocytophilum (strain HZ).